Reading from the N-terminus, the 249-residue chain is Type III pantothenate kinase (249 aa).

6–13 (DCGNSFIK) serves as a coordination point for ATP. Substrate is bound by residues Tyr-93 and 100–103 (GLDR). Asp-102 (proton acceptor) is an active-site residue. Asp-122 is a binding site for K(+). Thr-125 is a binding site for ATP. Thr-181 contributes to the substrate binding site.

The protein belongs to the type III pantothenate kinase family. In terms of assembly, homodimer. NH4(+) serves as cofactor. It depends on K(+) as a cofactor.

The protein localises to the cytoplasm. The enzyme catalyses (R)-pantothenate + ATP = (R)-4'-phosphopantothenate + ADP + H(+). The protein operates within cofactor biosynthesis; coenzyme A biosynthesis; CoA from (R)-pantothenate: step 1/5. Functionally, catalyzes the phosphorylation of pantothenate (Pan), the first step in CoA biosynthesis. The sequence is that of Type III pantothenate kinase from Pseudomonas syringae pv. syringae (strain B728a).